Consider the following 193-residue polypeptide: Cysteine and glycine-rich protein 1 (193 aa).

Residues 10–61 form the LIM zinc-binding 1 domain; that stretch reads CGVCQKTVYFAEEVQCEGNSFHKSCFLCMVCKKNLDSTTVAVHGEEIYCKSC. The Nuclear localization signal signature appears at 64 to 69; that stretch reads KKYGPK. Position 81 is a phosphoserine (serine 81). An N6-acetyllysine modification is found at lysine 84. Residue lysine 91 forms a Glycyl lysine isopeptide (Lys-Gly) (interchain with G-Cter in SUMO2) linkage. N6-acetyllysine is present on residues lysine 112, lysine 131, lysine 137, and lysine 161. Residues 119–170 form the LIM zinc-binding 2 domain; sequence CPRCSQAVYAAEKVIGAGKSWHKACFRCAKCGKGLESTTLADKDGEIYCKGC. Serine 192 carries the post-translational modification Phosphoserine.

Interacts with ASCC1; ASCC2 and TRIP4.

Its subcellular location is the nucleus. Functionally, could play a role in neuronal development. The sequence is that of Cysteine and glycine-rich protein 1 (CSRP1) from Homo sapiens (Human).